The sequence spans 37 residues: Large ribosomal subunit protein bL36 (37 aa).

It belongs to the bacterial ribosomal protein bL36 family.

The chain is Large ribosomal subunit protein bL36 from Thermobifida fusca (strain YX).